Consider the following 551-residue polypeptide: F-box only protein 31 (551 aa).

The segment at 12–38 is disordered; the sequence is QSGGCRRRQQRKGAGNGPELEDEEEED. The F-box domain maps to 58-104; the sequence is PRSLLHLPPEILVEIFSSLPGTELPSLAQVCRKFRQILTTDTIWKRR. 4 residues coordinate Zn(2+): Cys229, His237, Cys253, and His259. The segment at 402-459 is disordered; that stretch reads REQRQTGNEEDDGRGAGPDKAEHSQQPAPVLRPANEDANKVDGGDGEEQKPPNVQSFV. Composition is skewed to basic and acidic residues over residues 414-424 and 435-451; these read GRGAGPDKAEH and ANEDANKVDGGDGEEQK.

It belongs to the FBXO31 family. As to quaternary structure, part of a SCF (SKP1-cullin-F-box) protein ligase complex SCF(FBXO31).

It localises to the cytoplasm. It participates in protein modification; protein ubiquitination. Its function is as follows. Substrate-recognition component of the SCF(FBXO31) protein ligase complex, which specifically mediates the ubiquitination of proteins amidated at their C-terminus in response to oxidative stress, leading to their degradation by the proteasome. Fbxo31 specifically recognizes and binds C-terminal peptides bearing an amide: C-terminal amidation in response to oxidative stress takes place following protein fragmentation. The SCF(FBXO31) also plays a role in G1 arrest following DNA damage by mediating ubiquitination of phosphorylated cyclin-D1 (ccnd1), promoting its degradation by the proteasome, resulting in G1 arrest. The SCF(FBXO31) complex is however not a major regulator of ccnd1 stability during the G1/S transition. This is F-box only protein 31 (fbxo31) from Xenopus tropicalis (Western clawed frog).